Here is a 495-residue protein sequence, read N- to C-terminus: Meiosis-specific nuclear structural protein 1 (495 aa).

Positions 1–315 are interaction with BBOF1; the sequence is MASIRRTLSF…RLEEMLRQRE (315 aa). Coiled coils occupy residues 61–215 and 245–361; these read QDEQ…EKLM and IEEF…QMAL. Residues 172–199 form a disordered region; that stretch reads EESAAEDKRNQAKAQYSHDLEKQLEEQG.

The protein belongs to the MNS1 family. Able to form oligomers. Microtubule inner protein component of sperm flagellar doublet microtubules. Interacts with ODAD1. Interacts with BBOF1. In terms of tissue distribution, expressed in trachea multiciliated cells.

The protein resides in the nucleus. Its subcellular location is the cytoplasm. It is found in the cytoskeleton. It localises to the cilium axoneme. The protein localises to the flagellum axoneme. Microtubule inner protein (MIP) part of the dynein-decorated doublet microtubules (DMTs) in cilia axoneme, which is required for motile cilia beating. May play a role in the control of meiotic division and germ cell differentiation through regulation of pairing and recombination during meiosis. Required for sperm flagella assembly. May play a role in the assembly and function of the outer dynein arm-docking complex (ODA-DC). ODA-DC mediates outer dynein arms (ODA) binding onto the axonemal doublet microtubules. The sequence is that of Meiosis-specific nuclear structural protein 1 (MNS1) from Bos taurus (Bovine).